A 1363-amino-acid chain; its full sequence is Zinc finger protein 541 (1363 aa).

Disordered stretches follow at residues 1–23 (MEPYSLGEEGALPSEGHLPSFSE) and 106–137 (LGALKVPKEADEGGRATGSTRKGKRQHSSPQN). 3 consecutive C2H2-type zinc fingers follow at residues 140–162 (LDCSLCGKVFSSASSLSKHYLTH), 168–190 (HVCKVCSKAFKRQDHLTGHMLTH), and 196–221 (FVCIEQGCSKSYCDYRSLRRHYEVQH). Disordered regions lie at residues 232-269 (EEEAYGDPTHNHDVANQPPPSGLRSLGPPEARSPGSVL), 286-387 (KIPS…GWPE), 440-532 (VASR…PGGL), and 574-741 (QVAT…GYRL). Residues 311-321 (SLGSSSCTPAS) are compositionally biased toward polar residues. Basic and acidic residues predominate over residues 335–345 (EETHPPRKEAA). Positions 453–465 (PSSTPTSVEPSPS) are enriched in low complexity. Residues 597 to 608 (GPWPPQTLPPAP) show a composition bias toward pro residues. Residues 659-670 (PPSLTGPGLLPS) are compositionally biased toward low complexity. The segment at 838-860 (FVCKNCSQMFYTEKGLSSHMCFH) adopts a C2H2-type 4 zinc-finger fold. Residues 935-978 (QGQEKDGEERDSKESCQYRKRKKRPQPKALFAPPAPSALGEPGP) are disordered. Residues 937–951 (QEKDGEERDSKESCQ) show a composition bias toward basic and acidic residues. The region spanning 1063–1155 (PHINVGSRFQ…VALETLLLRG (93 aa)) is the ELM2 domain. Positions 1170 to 1221 (TGSDIWTPMEKRLFKKAFCAHKKDFYLIHKMIQTKSVAQCVEYYYIWKKMVK) constitute an SANT domain. The segment at 1243–1298 (RTEDKVTCSPRERPTHRPTPELKIKTKSYRRESILHSSPSAAPKRTPEPPGSVESQ) is disordered. Over residues 1244-1276 (TEDKVTCSPRERPTHRPTPELKIKTKSYRRESI) the composition is skewed to basic and acidic residues. The C2H2-type 5 zinc-finger motif lies at 1301–1323 (FPCRECERVFDKIKSRNAHMKRH). Positions 1343–1363 (LKEEEEEEEEELGADMGPLQW) are disordered. Residues 1345-1355 (EEEEEEEEELG) show a composition bias toward acidic residues.

As to quaternary structure, interacts with DNTTIP1. Identified in a complex with KCTD19, HDAC1 and HSPA2. Identified in a complex with HDAC1, HDAC2, DNTTIP1 and KCTD19. Identified in a complex with KCTD19 and HDAC1. As to expression, germ-cell-specific. Specifically present in testicular spermatogenic cells, but not in testicular and mature sperm. During spermatogenesis, it is present in spermatocytes and round spermatids only (at protein level).

The protein localises to the nucleus. Transcription regulator which is essential for male fertility and for the completion of meiotic prophase in spermatocytes. Regulates progression of the pachytene stage of meiotic prophase by activating the expression of genes involved in meiosis and post-meiosis during spermatogenesis. Maintains the repression of pre-pachytene transcriptional programs, including meiotic double-strand breaks (DSB) formation genes in pachytene spermatocytes and suppresses aberrant DSB formation after mid-pachytene, thus ensuring meiosis progression. The chain is Zinc finger protein 541 (Znf541) from Mus musculus (Mouse).